Reading from the N-terminus, the 29-residue chain is HSQGTFTSDYSKHLDSRYAQEFVQWLMNT.

A Phosphoserine modification is found at serine 2.

The protein belongs to the glucagon family.

The protein localises to the secreted. Glucagon plays a key role in glucose metabolism and homeostasis. Regulates blood glucose by increasing gluconeogenesis and decreasing glycolysis. The sequence is that of Glucagon (GCG) from Chinchilla chinchilla (Short-tailed chinchilla).